A 646-amino-acid polypeptide reads, in one-letter code: Stage V sporulation protein D (646 aa).

S294 serves as the catalytic Acyl-ester intermediate. The region spanning D580 to E638 is the PASTA domain.

It belongs to the transpeptidase family.

The protein resides in the cell membrane. It catalyses the reaction Preferential cleavage: (Ac)2-L-Lys-D-Ala-|-D-Ala. Also transpeptidation of peptidyl-alanyl moieties that are N-acyl substituents of D-alanine.. It participates in cell wall biogenesis; peptidoglycan biosynthesis. Its function is as follows. Penicillin-binding protein with an unknown catalytic activity. May have a specialized role in the morphogenesis of spore cortex, which is a modified form of peptidoglycan. Spore cortex formation is determined primarily by the mother cell. This is Stage V sporulation protein D (spoVD) from Bacillus subtilis (strain 168).